A 224-amino-acid polypeptide reads, in one-letter code: Deoxyribose-phosphate aldolase (224 aa).

Aspartate 92 functions as the Proton donor/acceptor in the catalytic mechanism. The active-site Schiff-base intermediate with acetaldehyde is lysine 155. Lysine 184 (proton donor/acceptor) is an active-site residue.

The protein belongs to the DeoC/FbaB aldolase family. DeoC type 1 subfamily.

It localises to the cytoplasm. It catalyses the reaction 2-deoxy-D-ribose 5-phosphate = D-glyceraldehyde 3-phosphate + acetaldehyde. It functions in the pathway carbohydrate degradation; 2-deoxy-D-ribose 1-phosphate degradation; D-glyceraldehyde 3-phosphate and acetaldehyde from 2-deoxy-alpha-D-ribose 1-phosphate: step 2/2. In terms of biological role, catalyzes a reversible aldol reaction between acetaldehyde and D-glyceraldehyde 3-phosphate to generate 2-deoxy-D-ribose 5-phosphate. This chain is Deoxyribose-phosphate aldolase, found in Halalkalibacterium halodurans (strain ATCC BAA-125 / DSM 18197 / FERM 7344 / JCM 9153 / C-125) (Bacillus halodurans).